The following is a 469-amino-acid chain: Trigger factor (469 aa).

Positions 165–250 (GDCVTIDYLG…VKAISKPDEL (86 aa)) constitute a PPIase FKBP-type domain. A compositionally biased stretch (basic and acidic residues) spans 439–460 (EYDESDLTEKKPEKKKGVEKTP). Residues 439–469 (EYDESDLTEKKPEKKKGVEKTPIRKKAPKKG) form a disordered region.

The protein belongs to the FKBP-type PPIase family. Tig subfamily.

The protein resides in the cytoplasm. The enzyme catalyses [protein]-peptidylproline (omega=180) = [protein]-peptidylproline (omega=0). Functionally, involved in protein export. Acts as a chaperone by maintaining the newly synthesized protein in an open conformation. Functions as a peptidyl-prolyl cis-trans isomerase. This Bartonella quintana (strain Toulouse) (Rochalimaea quintana) protein is Trigger factor.